Here is a 357-residue protein sequence, read N- to C-terminus: tRNA-specific 2-thiouridylase MnmA (357 aa).

ATP is bound by residues 11–18 (AMSGGVDS) and leucine 37. The Nucleophile role is filled by cysteine 102. The cysteines at positions 102 and 197 are disulfide-linked. Glycine 126 is an ATP binding site. Residues 148–150 (KDQ) are interaction with tRNA. The active-site Cysteine persulfide intermediate is cysteine 197. Residues 301–302 (RY) are interaction with tRNA.

The protein belongs to the MnmA/TRMU family.

Its subcellular location is the cytoplasm. It carries out the reaction S-sulfanyl-L-cysteinyl-[protein] + uridine(34) in tRNA + AH2 + ATP = 2-thiouridine(34) in tRNA + L-cysteinyl-[protein] + A + AMP + diphosphate + H(+). In terms of biological role, catalyzes the 2-thiolation of uridine at the wobble position (U34) of tRNA, leading to the formation of s(2)U34. This chain is tRNA-specific 2-thiouridylase MnmA, found in Dehalococcoides mccartyi (strain ATCC BAA-2266 / KCTC 15142 / 195) (Dehalococcoides ethenogenes (strain 195)).